A 456-amino-acid chain; its full sequence is Solute carrier family 49 member 4 homolog (456 aa).

At 1–29 (MGLEWSSPGERQPLLYPGGPRAPRVFGRR) the chain is on the cytoplasmic side. Residues 14-15 (LL) carry the Di-leucine motif; mediates lysosomal localization motif. The chain crosses the membrane as a helical span at residues 30–50 (WLVLLLFSLLAFLQGLVWNSW). Residues 51 to 67 (GPIQNSARTAYNFSGLD) are Lumenal-facing. The N-linked (GlcNAc...) asparagine glycan is linked to Asn-62. The chain crosses the membrane as a helical span at residues 68-88 (IALLVLWGPIGFLPCFLFMWL). At 89 to 95 (MDNRGLR) the chain is on the cytoplasmic side. A helical membrane pass occupies residues 96-116 (VTVLLTALLMVLGAGLRCVPV). The Lumenal segment spans residues 117–131 (QDLAVRRKLIHGGQL). A helical membrane pass occupies residues 132–152 (LNGFAGPTVMNAAPFLSTTWF). Residues 153–162 (SPDERATATA) lie on the Cytoplasmic side of the membrane. Residues 163 to 183 (IASMLSYLGGACAFLVGPLVV) form a helical membrane-spanning segment. Over 184-207 (PAPNSTSGLLLYSGSVGAIRDRIE) the chain is Lumenal. N-linked (GlcNAc...) asparagine glycosylation occurs at Asn-187. A helical membrane pass occupies residues 208–228 (AVMYAEFGIIFVVFAAILAYF). The Cytoplasmic segment spans residues 229–259 (PSRPPVPPSVAAASRRLSYRTSILRLLSNVR). The chain crosses the membrane as a helical span at residues 260-280 (FLLIVLAYAIPLGFYAGWSGV). Topologically, residues 281 to 292 (LDLILTPVHVTQ) are lumenal. The chain crosses the membrane as a helical span at residues 293–313 (VDAGWVGFWSIVGGCVVGIAV). The Cytoplasmic segment spans residues 314-326 (GRFADSIRGVLKP). The chain crosses the membrane as a helical span at residues 327-347 (ILLLLFSGAALSSTWFTLTFL). The Lumenal segment spans residues 348–362 (SNVTHLPLTTATLYT). N-linked (GlcNAc...) asparagine glycosylation occurs at Asn-349. Residues 363–383 (SCILIGVFLSGTVPIFFEMFV) traverse the membrane as a helical segment. Residues 384 to 392 (ETVYPIPEG) are Cytoplasmic-facing. The helical transmembrane segment at 393 to 413 (ITCGVVTFLSNLFMGVLLLFL) threads the bilayer. The Lumenal portion of the chain corresponds to 414–420 (TLYQTNL). Residue Asn-419 is glycosylated (N-linked (GlcNAc...) asparagine). The helical transmembrane segment at 421–441 (SWLNWCLTGSCFLSLLFIACF) threads the bilayer. Residues 442 to 456 (RESYDRLYLDVFVSV) lie on the Cytoplasmic side of the membrane.

This sequence belongs to the major facilitator superfamily.

The protein resides in the lysosome membrane. The catalysed reaction is pyridoxine(out) + n H(+)(out) = pyridoxine(in) + n H(+)(in). Mediates H(+)-dependent pyridoxine transport. This Xenopus tropicalis (Western clawed frog) protein is Solute carrier family 49 member 4 homolog (slc49a4).